Reading from the N-terminus, the 405-residue chain is MFTLARVLNNIGSASSNEPIPYCLICSEVADGNHFGVAAACRACAAFFRRTVQHNKIHECGRNGQCFFLSCKFLLVGFQISPLSSDARSMCKACRYGKCLEMGMQRSSVQQRREQLGKRLNISDDRGKPVLNKLRRAYEMLILNRKHVHNRRENQAPRAIGFNELPIVFQNESTSIYQFLWEAFPEYSMLLPDTKLAFFKNFFLSFCLFESSFNGCSAKQKNVMLIPSGDYIDLAHSESFFTNDHQTFTERDNIEILAQRLKLIQSSITVPLSAENVDIYEFLALAGIILLESDSESEADFQEEAVKIKSNIIKDLLFHYQCINIYDDAAMRLGAVLSILPSIQVCCSRSNNFLIINSKDVSESQSPFSRIHGNQKYAQFVRSSQESLRHVLANFIKFICKFVSI.

Positions 20 to 111 (IPYCLICSEV…MGMQRSSVQQ (92 aa)) form a DNA-binding region, nuclear receptor. 2 consecutive NR C4-type zinc fingers follow at residues 23–44 (CLIC…CRAC) and 60–94 (CGRN…CKAC). An NR LBD domain is found at 126–376 (RGKPVLNKLR…PFSRIHGNQK (251 aa)).

This sequence belongs to the nuclear hormone receptor family.

The protein resides in the nucleus. Orphan nuclear receptor. The protein is Nuclear hormone receptor family member nhr-199 (nhr-199) of Caenorhabditis elegans.